Consider the following 428-residue polypeptide: Putative zinc metalloprotease LL2128 (428 aa).

Position 19 (histidine 19) interacts with Zn(2+). Glutamate 20 is an active-site residue. Zn(2+) is bound at residue histidine 23. A run of 3 helical transmembrane segments spans residues 188-210 (GPLNNFILGIIAFIVLTFVQGGV), 354-376 (IVYLLAMLSINLGIVNLFPIPVL), and 401-423 (IITMVGVVFMLVLFVAVTWNDIL). Residues 188 to 282 (GPLNNFILGI…SETLSVTPKK (95 aa)) enclose the PDZ domain.

The protein belongs to the peptidase M50B family. Zn(2+) serves as cofactor.

The protein localises to the cell membrane. In Lactococcus lactis subsp. lactis (strain IL1403) (Streptococcus lactis), this protein is Putative zinc metalloprotease LL2128.